Reading from the N-terminus, the 294-residue chain is Uracil-DNA glycosylase (294 aa).

Asp-139 serves as the catalytic Proton acceptor.

This sequence belongs to the uracil-DNA glycosylase (UDG) superfamily. UNG family.

The protein resides in the host nucleus. It carries out the reaction Hydrolyzes single-stranded DNA or mismatched double-stranded DNA and polynucleotides, releasing free uracil.. Its function is as follows. Excises uracil residues from the DNA which can arise as a result of misincorporation of dUMP residues by DNA polymerase or deamination of cytosines. Therefore may reduce deleterious uracil incorporation into the viral genome, particularly in terminally differentiated cells which lack DNA repair enzymes. This is Uracil-DNA glycosylase (UL2) from Human herpesvirus 2 (strain 333) (HHV-2).